The sequence spans 438 residues: 23S rRNA (uracil(1939)-C(5))-methyltransferase RlmD (438 aa).

In terms of domain architecture, TRAM spans 9–68; the sequence is RRTVNRHIITVTADNLDAQGQGVARHQGKTIFVAGLLPGEQAQVQLTEEKRQFAKAKLVK. Residues Cys81, Cys87, Cys90, and Cys168 each contribute to the [4Fe-4S] cluster site. S-adenosyl-L-methionine contacts are provided by Gln272, Phe301, Asn306, Glu322, Asn349, and Asp370. Cys396 acts as the Nucleophile in catalysis.

Belongs to the class I-like SAM-binding methyltransferase superfamily. RNA M5U methyltransferase family. RlmD subfamily.

The catalysed reaction is uridine(1939) in 23S rRNA + S-adenosyl-L-methionine = 5-methyluridine(1939) in 23S rRNA + S-adenosyl-L-homocysteine + H(+). Catalyzes the formation of 5-methyl-uridine at position 1939 (m5U1939) in 23S rRNA. The sequence is that of 23S rRNA (uracil(1939)-C(5))-methyltransferase RlmD from Photorhabdus laumondii subsp. laumondii (strain DSM 15139 / CIP 105565 / TT01) (Photorhabdus luminescens subsp. laumondii).